Consider the following 78-residue polypeptide: uncharacterized protein (78 aa).

The interval 1-78 (MSSNSNTDHS…VDLEGPKDEQ (78 aa)) is disordered. Composition is skewed to basic and acidic residues over residues 10-33 (STGD…ETES) and 63-78 (LNLK…KDEQ).

This is an uncharacterized protein from Schizosaccharomyces pombe (strain 972 / ATCC 24843) (Fission yeast).